The sequence spans 765 residues: Transcription factor SKN7 (765 aa).

A disordered region spans residues 1–42 (MPPTNGEGGSQQPQQQQQQQQQQQQQQQQQQQQQQGGSGSSD). The span at 11–35 (QQPQQQQQQQQQQQQQQQQQQQQQQ) shows a compositional bias: low complexity. Positions 40 to 145 (SSDFVRKLYK…NLDNIRRKAP (106 aa)) are DNA-binding domain. The stretch at 157–198 (FNASQQQIAALSESLQATQQQLQALQQQCYELEKTNRLLVSE) forms a coiled coil. The tract at residues 160-220 (SQQQIAALSE…QASNEIINHL (61 aa)) is hydrophobic repeat HR-A/B. Residues 371–391 (SSSQITPSQITPPPKDQMSSM) form a disordered region. The Response regulatory domain maps to 398–514 (RVLLVEDDKT…NMSRLLRRHL (117 aa)). At D449 the chain carries 4-aspartylphosphate. The interval 542–765 (TAGPATTGVG…PGVGVAGFVQ (224 aa)) is transactivation domain. A compositionally biased stretch (gly residues) spans 550–564 (VGVGVAGAPSGGAHG). Disordered regions lie at residues 550 to 647 (VGVG…PAGL) and 686 to 765 (PGAM…GFVQ). Residues 569–584 (AQHQQGYAMAPPTTMQ) show a composition bias toward low complexity. Over residues 626-636 (QPPPPPTPTQP) the composition is skewed to pro residues. 2 stretches are compositionally biased toward low complexity: residues 637–647 (SPTSAAPPAGL) and 699–715 (GVGH…AGAR). The segment covering 755-765 (HPGVGVAGFVQ) has biased composition (gly residues).

Belongs to the SKN7 family. Homotrimer.

Its subcellular location is the nucleus. Its function is as follows. Transcription factor that is part of a SLN1-YPD1-SKN7 two-component regulatory system, which controls gene expression in response to changes in the osmolarity of the extracellular environment. Under low osmotic conditions, phosphorylated and activated by the phosphorelay intermediate protein YPD1. Also activated in response to oxidative stress, independent on the two-component regulatory system. Regulates heat shock genes in response to oxidative stress and genes involved in cell wall integrity in response to osmotic changes. The polypeptide is Transcription factor SKN7 (Chaetomium thermophilum (strain DSM 1495 / CBS 144.50 / IMI 039719) (Thermochaetoides thermophila)).